We begin with the raw amino-acid sequence, 792 residues long: DEAD-box ATP-dependent RNA helicase 40 (792 aa).

The span at 1 to 16 (MSAGTAPAAPRYAPDD) shows a compositional bias: low complexity. Disordered stretches follow at residues 1 to 25 (MSAG…PWRG) and 44 to 118 (TQYE…PLPA). The WW domain occupies 17 to 51 (PSLPKPWRGLVDGTTGYLYYWNPETNITQYEKPLP). The span at 52–68 (PEDQLPPPPPLPPPPPR) shows a compositional bias: pro residues. 2 stretches are compositionally biased toward basic and acidic residues: residues 70 to 80 (GRGDRDRDRRD) and 88 to 108 (PRRD…DHRS). Residues 150 to 178 (TSFETGGFPPEILKEIQRAGFSSPTPIQA) carry the Q motif motif. Residues 181–355 (WPIALQCQDV…EDLLVHPVQV (175 aa)) form the Helicase ATP-binding domain. 194–201 (AKTGSGKT) provides a ligand contact to ATP. A DEAD box motif is present at residues 303–306 (DEAD). One can recognise a Helicase C-terminal domain in the interval 384 to 528 (RLEQILRSQD…RVPRDLADMA (145 aa)). Residues 523-792 (DLADMASRGG…NATVQNGGDN (270 aa)) are disordered. 2 stretches are compositionally biased toward basic and acidic residues: residues 543–560 (TRSD…RYGG) and 572–588 (DSSR…DGRS). 2 stretches are compositionally biased toward basic residues: residues 589–599 (RRSGRGRSRSR) and 609–654 (RSPK…RRHE). Residues 668–708 (GHGERKRTPEADPSRNHTNHSDPKDDRHPEDGKVGKVDLDR) show a composition bias toward basic and acidic residues. A compositionally biased stretch (polar residues) spans 725–739 (GKTSRSVSPGNQVEG). The span at 764–777 (DEEEGMIDEDGEIA) shows a compositional bias: acidic residues.

It belongs to the DEAD box helicase family. DDX5/DBP2 subfamily.

It is found in the nucleus. It carries out the reaction ATP + H2O = ADP + phosphate + H(+). Functionally, ATP-dependent RNA helicase involved nonsense-mediated mRNA decay and ribosome biogenesis through rRNA processing. This is DEAD-box ATP-dependent RNA helicase 40 from Oryza sativa subsp. japonica (Rice).